The sequence spans 1358 residues: Regulatory protein SIR4 (1358 aa).

Polar residues predominate over residues 1–15 (MPNDNKTPNRSSTPK). Disordered regions lie at residues 1–98 (MPND…PHSN), 252–277 (SLSVPKVSAGDSGISPEESKARSPGI), 356–466 (HDEK…PPEI), 498–544 (VQGE…ISNG), 677–726 (ASTE…EDEQ), 752–787 (VSDSDDSSSDNDSLTDLESLSSGESNEIKVTNDLDT), and 913–970 (HSQE…ENLS). Positions 26-39 (KIPEREEKSNEVKT) are enriched in basic and acidic residues. Polar residues-rich tracts occupy residues 49 to 66 (KSKNYSRPSTAIHTSPHQ) and 75 to 96 (HKQLQQPKSSPLKKNNYNSFPH). Over residues 373–388 (QKMKEDADLKRMEILK) the composition is skewed to basic and acidic residues. The segment covering 428–437 (QENNYNSTSR) has biased composition (polar residues). Positions 452–464 (KNGENKKIGKRPP) are enriched in basic and acidic residues. The segment covering 507–517 (RNNTLNVTPSK) has biased composition (polar residues). Serine 692 carries the post-translational modification Phosphoserine. Polar residues predominate over residues 706-720 (FPVSLSQPSKKSFAN). The span at 754 to 766 (DSDDSSSDNDSLT) shows a compositional bias: acidic residues. Residues 777–787 (NEIKVTNDLDT) are compositionally biased toward basic and acidic residues. Positions 916-932 (EQNSSSAKPSQIPTVSS) are enriched in polar residues. A Glycyl lysine isopeptide (Lys-Gly) (interchain with G-Cter in SUMO) cross-link involves residue lysine 1128. Positions 1271 to 1347 (LSFVDIVLSK…DAKINKLMEK (77 aa)) form a coiled coil.

In terms of assembly, homodimer. Interacts with MPS3. Interacts with RIS1. Interacts with SIR1, SIR2 and SIR3. Interacts with YKU80. Interacts with UBP10. Interacts with RAP1 (via C-terminus).

The protein resides in the nucleus. In terms of biological role, the proteins SIR1 through SIR4 are required for transcriptional repression of the silent mating type loci, HML and HMR. The proteins SIR2 through SIR4 repress mulitple loci by modulating chromatin structure. Involves the compaction of chromatin fiber into a more condensed form. In Saccharomyces cerevisiae (strain ATCC 204508 / S288c) (Baker's yeast), this protein is Regulatory protein SIR4 (SIR4).